The following is a 391-amino-acid chain: Phosphoglycerate kinase (391 aa).

Residues 21-23 (DLN), arginine 36, 59-62 (HLGR), arginine 113, and arginine 146 contribute to the substrate site. ATP is bound by residues lysine 197, glutamate 319, and 345–348 (GGDT).

Belongs to the phosphoglycerate kinase family. Monomer.

The protein resides in the cytoplasm. The catalysed reaction is (2R)-3-phosphoglycerate + ATP = (2R)-3-phospho-glyceroyl phosphate + ADP. It functions in the pathway carbohydrate degradation; glycolysis; pyruvate from D-glyceraldehyde 3-phosphate: step 2/5. This is Phosphoglycerate kinase from Shewanella baltica (strain OS223).